Reading from the N-terminus, the 397-residue chain is Transcription factor TGAL6 (397 aa).

The bZIP domain maps to 104–148 (PDKVLRRLAQNREAARKSRLRKKAYIQQLETSRLKLAQLEQELQR). The interval 106–126 (KVLRRLAQNREAARKSRLRKK) is basic motif. The leucine-zipper stretch occupies residues 132 to 146 (LETSRLKLAQLEQEL). Residues 175 to 390 (ALGFEIKYSH…RALSSLWAAR (216 aa)) enclose the DOG1 domain.

This sequence belongs to the bZIP family.

It localises to the nucleus. Transcriptional regulator involved in defense response. The chain is Transcription factor TGAL6 from Oryza sativa subsp. japonica (Rice).